Reading from the N-terminus, the 358-residue chain is E3 ubiquitin-protein ligase RNF146 (358 aa).

Residues 36-74 (CAICLQTCVHPVSLPCKHVFCYLCVKGASWLGKRCALCR) form an RING-type zinc finger. Glycyl lysine isopeptide (Lys-Gly) (interchain with G-Cter in ubiquitin) cross-links involve residues Lys-84 and Lys-94. Residues 91-167 (EELKAASRGN…EHGRRRKIKR (77 aa)) enclose the WWE domain. A glycoprotein is bound by residues Tyr-107, Arg-110, and Trp-114. A Glycyl lysine isopeptide (Lys-Gly) (interchain with G-Cter in ubiquitin) cross-link involves residue Lys-130. A glycoprotein-binding residues include Tyr-144, Gln-153, Arg-163, and Lys-175. A Glycyl lysine isopeptide (Lys-Gly) (interchain with G-Cter in ubiquitin) cross-link involves residue Lys-175. Residues 253-358 (GDNTAERSHR…PDGQCTVTEV (106 aa)) form a disordered region. A compositionally biased stretch (acidic residues) spans 283–297 (SIEETESDASSDSED). Residues Ser-289 and Ser-293 each carry the phosphoserine modification. Residues 305 to 322 (HSLTQQRLLVSNANQTVP) are compositionally biased toward polar residues.

Can form homooligomers. Interacts with PARsylated AXIN1, AXIN2, BLZF1, CASC3, H1-2, IPO7, LIG3, NCL, PARP1, XRCC1, XRCC5 and XRCC6. Interacts with DDB1, DHX15, IQGAP1, LRPPRC, PARP2, PRKDC, RUVBL2, TNKS1 and TNKS2. Binding often leads to interactor ubiquitination, in the presence of the appropriate E1 and E2 enzymes, and proteasomal degradation. Post-translationally, ubiquitinated; autoubiquitinated. Autoubiquitination is enhanced upon poly(ADP-ribose)-binding.

It localises to the cytoplasm. Its subcellular location is the cytosol. It is found in the nucleus. The enzyme catalyses S-ubiquitinyl-[E2 ubiquitin-conjugating enzyme]-L-cysteine + [acceptor protein]-L-lysine = [E2 ubiquitin-conjugating enzyme]-L-cysteine + N(6)-ubiquitinyl-[acceptor protein]-L-lysine.. Its pathway is protein modification; protein ubiquitination. Functionally, E3 ubiquitin-protein ligase that specifically binds poly-ADP-ribosylated (PARsylated) proteins and mediates their ubiquitination and subsequent degradation. May regulate many important biological processes, such as cell survival and DNA damage response. Acts as an activator of the Wnt signaling pathway by mediating the ubiquitination of PARsylated AXIN1 and AXIN2, 2 key components of the beta-catenin destruction complex. Acts in cooperation with tankyrase proteins (TNKS and TNKS2), which mediate PARsylation of target proteins AXIN1, AXIN2, BLZF1, CASC3, TNKS and TNKS2. Recognizes and binds tankyrase-dependent PARsylated proteins via its WWE domain and mediates their ubiquitination, leading to their degradation. Different ubiquitin linkage types have been observed: TNKS2 undergoes ubiquitination at 'Lys-48' and 'Lys-63', while AXIN1 is only ubiquitinated at 'Lys-48'. May regulate TNKS and TNKS2 subcellular location, preventing aggregation at a centrosomal location. Neuroprotective protein. Protects the brain against N-methyl-D-aspartate (NMDA) receptor-mediated glutamate excitotoxicity and ischemia, by interfering with PAR-induced cell death, called parthanatos. Prevents nuclear translocation of AIFM1 in a PAR-binding dependent manner. Does not affect PARP1 activation. Protects against cell death induced by DNA damaging agents, such as N-methyl-N-nitro-N-nitrosoguanidine (MNNG) and rescues cells from G1 arrest. Promotes cell survival after gamma-irradiation. Facilitates DNA repair. The chain is E3 ubiquitin-protein ligase RNF146 (RNF146) from Pongo abelii (Sumatran orangutan).